Consider the following 291-residue polypeptide: Isopentenyl-diphosphate Delta-isomerase I, chloroplastic (291 aa).

The N-terminal 52 residues, 1 to 52 (MSTASLFSFPSFHLRSLLPSLSSSSSSSSSRFAPPRLSPIRSPAPRTQLSVR), are a transit peptide targeting the chloroplast. Ser-2 carries the N-acetylthreonine modification. Positions 20 to 39 (SLSSSSSSSSSRFAPPRLSP) are enriched in low complexity. Positions 20 to 43 (SLSSSSSSSSSRFAPPRLSPIRSP) are disordered. Lys-95 is a substrate binding site. The Mg(2+) site is built by His-99 and His-111. One can recognise a Nudix hydrolase domain in the interval 109 to 261 (LLHRAFSVFL…AVKLSPWFRL (153 aa)). Substrate contacts are provided by Arg-130 and Lys-134. The active site involves Cys-146. Ser-147 provides a ligand contact to substrate. The Nudix box signature appears at 147-177 (SHPLYRESELIEENVLGVRNAAQRKLFDELG). Mg(2+)-binding residues include Glu-206 and Glu-208. The active site involves Glu-208.

Belongs to the IPP isomerase type 1 family. Requires Mg(2+) as cofactor.

The protein localises to the plastid. Its subcellular location is the chloroplast. The protein resides in the cytoplasm. It catalyses the reaction isopentenyl diphosphate = dimethylallyl diphosphate. It participates in isoprenoid biosynthesis; dimethylallyl diphosphate biosynthesis; dimethylallyl diphosphate from isopentenyl diphosphate: step 1/1. Its pathway is porphyrin-containing compound metabolism; chlorophyll biosynthesis. Catalyzes the 1,3-allylic rearrangement of the homoallylic substrate isopentenyl (IPP) to its highly electrophilic allylic isomer, dimethylallyl diphosphate (DMAPP). This chain is Isopentenyl-diphosphate Delta-isomerase I, chloroplastic (IPP1), found in Arabidopsis thaliana (Mouse-ear cress).